We begin with the raw amino-acid sequence, 110 residues long: UPF0060 membrane protein Bamb_1160 (110 aa).

4 consecutive transmembrane segments (helical) span residues 9–29, 34–54, 66–86, and 88–108; these read ALFA…WLVL, PVWL…LLTL, YGGV…GVAL, and RWDA…ALQP.

It belongs to the UPF0060 family.

It localises to the cell inner membrane. This is UPF0060 membrane protein Bamb_1160 from Burkholderia ambifaria (strain ATCC BAA-244 / DSM 16087 / CCUG 44356 / LMG 19182 / AMMD) (Burkholderia cepacia (strain AMMD)).